Consider the following 495-residue polypeptide: Cobyric acid synthase (495 aa).

Residues 256–444 form the GATase cobBQ-type domain; sequence KVNVAVVLLR…VHGILDNPSV (189 aa). Residue C337 is the Nucleophile of the active site. The active site involves H436.

The protein belongs to the CobB/CobQ family. CobQ subfamily.

The protein operates within cofactor biosynthesis; adenosylcobalamin biosynthesis. In terms of biological role, catalyzes amidations at positions B, D, E, and G on adenosylcobyrinic A,C-diamide. NH(2) groups are provided by glutamine, and one molecule of ATP is hydrogenolyzed for each amidation. The sequence is that of Cobyric acid synthase from Bacteroides fragilis (strain ATCC 25285 / DSM 2151 / CCUG 4856 / JCM 11019 / LMG 10263 / NCTC 9343 / Onslow / VPI 2553 / EN-2).